We begin with the raw amino-acid sequence, 313 residues long: Ornithine carbamoyltransferase (313 aa).

Carbamoyl phosphate contacts are provided by residues 61–64 (STRT), Gln88, Arg112, and 139–142 (HPCQ). L-ornithine contacts are provided by residues Asn170, Asp228, and 232–233 (SM). Carbamoyl phosphate-binding positions include 268–269 (CL) and Arg296.

The protein belongs to the aspartate/ornithine carbamoyltransferase superfamily. OTCase family.

Its subcellular location is the cytoplasm. The catalysed reaction is carbamoyl phosphate + L-ornithine = L-citrulline + phosphate + H(+). The protein operates within amino-acid biosynthesis; L-arginine biosynthesis; L-arginine from L-ornithine and carbamoyl phosphate: step 1/3. Functionally, reversibly catalyzes the transfer of the carbamoyl group from carbamoyl phosphate (CP) to the N(epsilon) atom of ornithine (ORN) to produce L-citrulline. The chain is Ornithine carbamoyltransferase from Bordetella parapertussis (strain 12822 / ATCC BAA-587 / NCTC 13253).